The sequence spans 392 residues: Keratin, type I cuticular Ha4 (392 aa).

Residues 1-56 form a head region; that stretch reads MSCESCLPALSCRTSCSSRPCVPPSCHGCTLPGACNIPANVGNCNWFCEGSFNGNE. The region spanning 56 to 367 is the IF rod domain; that stretch reads EKETMQFLND…SLLESEDCNL (312 aa). The coil 1A stretch occupies residues 57–91; sequence KETMQFLNDRLASYMEKVRQLERENAELECRIQER. Residues 92–102 form a linker 1 region; it reads NQQQDPLVCPA. A coil 1B region spans residues 103 to 203; the sequence is YQAYFRTIEE…HEEEVNTLRC (101 aa). Positions 204–219 are linker 12; that stretch reads QLGDRLNVEVDAAPTV. The interval 220-363 is coil 2; that stretch reads DLNRVLNETR…NTYRSLLESE (144 aa). The tract at residues 364–392 is tail; that stretch reads DCNLPCNPCATTNASGSCCGPCGSSKRCC.

Belongs to the intermediate filament family. As to expression, expressed in the hair root in the hair shaft cuticle and cortex.

In Mus musculus (Mouse), this protein is Keratin, type I cuticular Ha4.